The following is a 136-amino-acid chain: Small ribosomal subunit protein uS9 (136 aa).

Belongs to the universal ribosomal protein uS9 family.

The sequence is that of Small ribosomal subunit protein uS9 from Borrelia turicatae (strain 91E135).